A 423-amino-acid polypeptide reads, in one-letter code: UBX domain-containing protein 1 (423 aa).

The interval 44 to 167 (QTDDQKDRRE…EVTDPSDPNS (124 aa)) is disordered. The span at 46-66 (DDQKDRREEAHWNRQQEKALK) shows a compositional bias: basic and acidic residues. The span at 69–79 (AFSTNSSNKAI) shows a compositional bias: polar residues. Residues 115–130 (SSRSGSGNNSRFMSFS) are compositionally biased toward low complexity. A phosphoserine mark is found at serine 128, serine 210, and serine 224. The SEP domain occupies 232–297 (KVTREITFWK…VYKKLDESYK (66 aa)). A Glycyl lysine isopeptide (Lys-Gly) (interchain with G-Cter in ubiquitin) cross-link involves residue lysine 241. Residues 299 to 348 (PTRKLGGFSGQGQRLGSPIPGESSPAEVPKNETPAAQEQPMPDNEPKQGD) form a disordered region. Phosphoserine occurs at positions 315, 321, and 322. Residue threonine 331 is modified to Phosphothreonine. The region spanning 344 to 421 (PKQGDTSIQI…DLLNSVVVQR (78 aa)) is the UBX domain.

Forms a complex composed of CDC48, NPL4, UFD1, DOA1, SHP1 and deubiquitinase OTU1. Interacts with CDC48.

It is found in the nucleus. The protein localises to the cytoplasm. Involved in CDC48-dependent protein degradation through the ubiquitin/proteasome pathway. Direct or indirect positive regulator of GLC7 activity. The chain is UBX domain-containing protein 1 (SHP1) from Saccharomyces cerevisiae (strain ATCC 204508 / S288c) (Baker's yeast).